The following is a 310-amino-acid chain: tRNA uridine(34) hydroxylase (310 aa).

Residues 134–232 (DDPDTLLIDT…YFEEVSQTES (99 aa)) enclose the Rhodanese domain. The active-site Cysteine persulfide intermediate is the Cys-192.

It belongs to the TrhO family.

It catalyses the reaction uridine(34) in tRNA + AH2 + O2 = 5-hydroxyuridine(34) in tRNA + A + H2O. Its function is as follows. Catalyzes oxygen-dependent 5-hydroxyuridine (ho5U) modification at position 34 in tRNAs. The chain is tRNA uridine(34) hydroxylase from Prochlorococcus marinus (strain MIT 9313).